Reading from the N-terminus, the 158-residue chain is C-type lectin TsL (158 aa).

The N-terminal stretch at 1–23 (MGRFIFVSFGLLVVFLSLSGAKG) is a signal peptide. The region spanning 24-158 (SCCTNDSLPM…KNSFLCQCKF (135 aa)) is the C-type lectin domain. Cystine bridges form between Cys26–Cys37, Cys54–Cys154, Cys61–Cys156, and Cys129–Cys146. The N-linked (GlcNAc...) (high mannose) asparagine glycan is linked to Asn28. Positions 119, 121, 127, 142, and 143 each coordinate Ca(2+). The Galactose-binding motif lies at 119–121 (QPD).

This sequence belongs to the true venom lectin family. In terms of assembly, homodimer; disulfide-linked. As to expression, expressed by the venom gland.

It localises to the secreted. Its function is as follows. Galactose-binding protein which recognizes specific carbohydrate structures and agglutinates a variety of animal cells by binding to cell-surface glycoproteins and glycolipids. May be a calcium-dependent lectin. The polypeptide is C-type lectin TsL (Trimeresurus stejnegeri (Chinese green tree viper)).